The following is a 194-amino-acid chain: Imidazoleglycerol-phosphate dehydratase (194 aa).

This sequence belongs to the imidazoleglycerol-phosphate dehydratase family.

Its subcellular location is the cytoplasm. It catalyses the reaction D-erythro-1-(imidazol-4-yl)glycerol 3-phosphate = 3-(imidazol-4-yl)-2-oxopropyl phosphate + H2O. It participates in amino-acid biosynthesis; L-histidine biosynthesis; L-histidine from 5-phospho-alpha-D-ribose 1-diphosphate: step 6/9. The polypeptide is Imidazoleglycerol-phosphate dehydratase (Chlorobaculum parvum (strain DSM 263 / NCIMB 8327) (Chlorobium vibrioforme subsp. thiosulfatophilum)).